Reading from the N-terminus, the 176-residue chain is Interleukin-7 (176 aa).

Positions 1-25 (MFHVSFRYIFGIPPLILVLLPVASS) are cleaved as a signal peptide. Disulfide bonds link Cys-27-Cys-165, Cys-58-Cys-153, and Cys-71-Cys-116. Asn-94, Asn-115, and Asn-140 each carry an N-linked (GlcNAc...) asparagine glycan. Positions 118 to 143 (SKGKGRKPPSLSEAQPTKNLEENKSS) are disordered.

It belongs to the IL-7/IL-9 family. In terms of assembly, interacts with IL7R and CSF2RG.

The protein localises to the secreted. Functionally, hematopoietic cytokine that plays an essential role in the development, expansion, and survival of naive and memory T-cells and B-cells thereby regulating the number of mature lymphocytes and maintaining lymphoid homeostasis. Mechanistically, exerts its biological effects through a receptor composed of IL7RA subunit and the cytokine receptor common subunit gamma/CSF2RG. Binding to the receptor leads to activation of various kinases including JAK1 or JAK3 depending on the cell type and subsequently propagation of signals through activation of several downstream signaling pathways including the PI3K/Akt/mTOR or the JAK-STAT5. The polypeptide is Interleukin-7 (IL7) (Bos taurus (Bovine)).